A 557-amino-acid polypeptide reads, in one-letter code: Dihydroxy-acid dehydratase 1 (557 aa).

Cysteine 50 serves as a coordination point for [2Fe-2S] cluster. Aspartate 82 is a Mg(2+) binding site. [2Fe-2S] cluster is bound at residue cysteine 123. Residues aspartate 124 and lysine 125 each coordinate Mg(2+). Lysine 125 carries the post-translational modification N6-carboxylysine. A [2Fe-2S] cluster-binding site is contributed by cysteine 195. Glutamate 447 lines the Mg(2+) pocket. Serine 473 functions as the Proton acceptor in the catalytic mechanism.

The protein belongs to the IlvD/Edd family. In terms of assembly, homodimer. It depends on [2Fe-2S] cluster as a cofactor. Requires Mg(2+) as cofactor.

It carries out the reaction (2R)-2,3-dihydroxy-3-methylbutanoate = 3-methyl-2-oxobutanoate + H2O. The enzyme catalyses (2R,3R)-2,3-dihydroxy-3-methylpentanoate = (S)-3-methyl-2-oxopentanoate + H2O. Its pathway is amino-acid biosynthesis; L-isoleucine biosynthesis; L-isoleucine from 2-oxobutanoate: step 3/4. It participates in amino-acid biosynthesis; L-valine biosynthesis; L-valine from pyruvate: step 3/4. Functions in the biosynthesis of branched-chain amino acids. Catalyzes the dehydration of (2R,3R)-2,3-dihydroxy-3-methylpentanoate (2,3-dihydroxy-3-methylvalerate) into 2-oxo-3-methylpentanoate (2-oxo-3-methylvalerate) and of (2R)-2,3-dihydroxy-3-methylbutanoate (2,3-dihydroxyisovalerate) into 2-oxo-3-methylbutanoate (2-oxoisovalerate), the penultimate precursor to L-isoleucine and L-valine, respectively. The protein is Dihydroxy-acid dehydratase 1 of Cupriavidus pinatubonensis (strain JMP 134 / LMG 1197) (Cupriavidus necator (strain JMP 134)).